The following is a 604-amino-acid chain: MATLGAWDYTILAVVLIISVAIGIYYRFVGGKQSTTTEYLLADRSMNVAPVAFSLMASFMSAVTILGVSMENYQYGTMFVVINLSYVLSTPVAAYLIIPVFYRLKTASVYEYLELRFGYATRLAASLSFSLQMVLYMGIVVYAPALALEAVTGLSQVFSIVIVGVVCTFYATLGGMKAVLITDIYQSLLMFAAVFSVIICAWVKAGSLEVIWRVAQENGRINLTNFSVDPTERHTWFTQILGGCATYLAIYGVNQTQVQRLMAVKSLSAARAALWWCLPILCLLSLSTCFSGLCIYWYYRDCDPLLEGRVNSRDQVMPLFVVDTMGEYTGLAGLFVSGIFCASLSTISSIISSLAAVTLEDYLKPLVSCCAKRTLTDRQTLWYSKLLSLFFGALCIGMAFMAGSIGGLLQAALSIFGIIGGPLLGLFTLGMYVTKANEKGAIGGLLISLAFCFWIGFGQPKPPLVSLDMSTAGCPVDRSFARDIFLKTVIAVAEEEHYFYLYRISYMWYAALGFLITFFGGWLLSWLFALLKWDNNRRIYQDADCTLIKHDLFVPPIAKRLQRRQMPLLVVTGTSSEIGGITTESATAPPRLDEIEWEKHKAVA.

6 helical membrane passes run 4–24, 48–68, 78–98, 134–154, 160–180, and 188–208; these read LGAW…AIGI, VAPV…ILGV, MFVV…YLII, VLYM…VTGL, IVIV…KAVL, and LLMF…AGSL. 2 N-linked (GlcNAc...) asparagine glycosylation sites follow: Asn222 and Asn225. The next 7 membrane-spanning stretches (helical) occupy residues 234-254, 273-293, 331-351, 389-409, 413-433, 440-460, and 511-531; these read HTWF…YGVN, ALWW…FSGL, LAGL…SSII, LFFG…GGLL, LSIF…GMYV, GAIG…FGQP, and ALGF…FALL.

The protein belongs to the sodium:solute symporter (SSF) (TC 2.A.21) family.

It is found in the cell membrane. The protein is Putative sodium-dependent multivitamin transporter of Drosophila melanogaster (Fruit fly).